A 301-amino-acid chain; its full sequence is Light-independent protochlorophyllide reductase iron-sulfur ATP-binding protein (301 aa).

The span at 1–13 (MNVTLRPPLTTAP) shows a compositional bias: low complexity. Positions 1–21 (MNVTLRPPLTTAPRRPDGAGS) are disordered. Residues 45–50 (GIGKST) and Lys-74 contribute to the ATP site. Ser-49 provides a ligand contact to Mg(2+). Residues Cys-130 and Cys-164 each coordinate [4Fe-4S] cluster. ATP is bound by residues 215-216 (NR) and 239-241 (PDL).

It belongs to the NifH/BchL/ChlL family. In terms of assembly, homodimer. Protochlorophyllide reductase is composed of three subunits; BchL, BchN and BchB. [4Fe-4S] cluster is required as a cofactor.

The catalysed reaction is chlorophyllide a + oxidized 2[4Fe-4S]-[ferredoxin] + 2 ADP + 2 phosphate = protochlorophyllide a + reduced 2[4Fe-4S]-[ferredoxin] + 2 ATP + 2 H2O. It participates in porphyrin-containing compound metabolism; bacteriochlorophyll biosynthesis (light-independent). Component of the dark-operative protochlorophyllide reductase (DPOR) that uses Mg-ATP and reduced ferredoxin to reduce ring D of protochlorophyllide (Pchlide) to form chlorophyllide a (Chlide). This reaction is light-independent. The L component serves as a unique electron donor to the NB-component of the complex, and binds Mg-ATP. This Bradyrhizobium sp. (strain BTAi1 / ATCC BAA-1182) protein is Light-independent protochlorophyllide reductase iron-sulfur ATP-binding protein.